Here is a 102-residue protein sequence, read N- to C-terminus: Cytochrome c oxidase subunit 6a, mitochondrial (102 aa).

A mitochondrion-targeting transit peptide spans 1-36; the sequence is MATAIVRSALSRAVTRAAPKTSVAPKRNFSSSAGHD.

Belongs to the cytochrome c oxidase subunit 6A (TC 3.D.4.11) family.

The protein localises to the mitochondrion inner membrane. This protein is one of the nuclear-coded polypeptide chains of cytochrome c oxidase, the terminal oxidase in mitochondrial electron transport. This Arabidopsis thaliana (Mouse-ear cress) protein is Cytochrome c oxidase subunit 6a, mitochondrial (COX6A).